The chain runs to 103 residues: Large ribosomal subunit protein bL21 (103 aa).

It belongs to the bacterial ribosomal protein bL21 family. Part of the 50S ribosomal subunit. Contacts protein L20.

This protein binds to 23S rRNA in the presence of protein L20. This Clostridium acetobutylicum (strain ATCC 824 / DSM 792 / JCM 1419 / IAM 19013 / LMG 5710 / NBRC 13948 / NRRL B-527 / VKM B-1787 / 2291 / W) protein is Large ribosomal subunit protein bL21.